Reading from the N-terminus, the 433-residue chain is ATP-dependent protease ATPase subunit HslU (433 aa).

ATP contacts are provided by residues V18, 60 to 65, D246, E311, and R383; that span reads GVGKTE.

This sequence belongs to the ClpX chaperone family. HslU subfamily. A double ring-shaped homohexamer of HslV is capped on each side by a ring-shaped HslU homohexamer. The assembly of the HslU/HslV complex is dependent on binding of ATP.

It localises to the cytoplasm. Functionally, ATPase subunit of a proteasome-like degradation complex; this subunit has chaperone activity. The binding of ATP and its subsequent hydrolysis by HslU are essential for unfolding of protein substrates subsequently hydrolyzed by HslV. HslU recognizes the N-terminal part of its protein substrates and unfolds these before they are guided to HslV for hydrolysis. The protein is ATP-dependent protease ATPase subunit HslU of Rhodopseudomonas palustris (strain TIE-1).